Reading from the N-terminus, the 381-residue chain is E3 ubiquitin-protein ligase RNF34 (381 aa).

The FYVE-type zinc-finger motif lies at 56 to 107; that stretch reads EGPNIVCKACGLSFSVFRKKHVCCDCKKDFCSLCSVSQENLRRCSTCHLLQE. One can recognise an SAP 1 domain in the interval 115–134; the sequence is LMRLKVKDLRQYLLLRNVPT. At Ser169 the chain carries Phosphoserine. A disordered region spans residues 216–261; it reads LASANTDDEDGEEDDDDDDDDDDEDDDEQEENLEEQNPGLSKKKAR. Residues 221–249 are compositionally biased toward acidic residues; that stretch reads TDDEDGEEDDDDDDDDDDEDDDEQEENLE. 2 positions are modified to phosphoserine: Ser263 and Ser265. One can recognise an SAP 2 domain in the interval 273-287; it reads VEGMSVRQLKEILAR. The segment at 334–369 adopts an RING-type zinc-finger fold; that stretch reads CRICMDAVIDCVLLECGHMVTCTKCGKRMSECPICR.

Interacts with CASP8 and CASP10. Interacts with p53/TP53; involved in p53/TP53 ubiquitination. Interacts (via RING-type zinc finger) with MDM2; the interaction stabilizes MDM2. Interacts (via RING-type zinc finger) with PPARGC1A. Interacts with NOD1. Post-translationally, proteolytically cleaved by caspases upon induction of apoptosis by TNF. In terms of processing, autoubiquitinated (in vitro). Ubiquitous. Detected in brain, cerebellum, midbrain, hippocampus, striatum, heart, lung, kidney, muscle, spleen and testis.

It localises to the cell membrane. The protein resides in the endomembrane system. The protein localises to the nucleus. It is found in the nucleus speckle. Its subcellular location is the cytoplasm. It localises to the cytosol. It catalyses the reaction S-ubiquitinyl-[E2 ubiquitin-conjugating enzyme]-L-cysteine + [acceptor protein]-L-lysine = [E2 ubiquitin-conjugating enzyme]-L-cysteine + N(6)-ubiquitinyl-[acceptor protein]-L-lysine.. It functions in the pathway protein modification; protein ubiquitination. E3 ubiquitin-protein ligase that regulates several biological processes through the ubiquitin-mediated proteasomal degradation of various target proteins. Ubiquitinates the caspases CASP8 and CASP10, promoting their proteasomal degradation, to negatively regulate cell death downstream of death domain receptors in the extrinsic pathway of apoptosis. May mediate 'Lys-48'-linked polyubiquitination of RIPK1 and its subsequent proteasomal degradation thereby indirectly regulating the tumor necrosis factor-mediated signaling pathway. Negatively regulates p53/TP53 through its direct ubiquitination and targeting to proteasomal degradation. Indirectly, may also negatively regulate p53/TP53 through ubiquitination and degradation of SFN. Mediates PPARGC1A proteasomal degradation probably through ubiquitination thereby indirectly regulating the metabolism of brown fat cells. Possibly involved in innate immunity, through 'Lys-48'-linked polyubiquitination of NOD1 and its subsequent proteasomal degradation. The sequence is that of E3 ubiquitin-protein ligase RNF34 from Rattus norvegicus (Rat).